Reading from the N-terminus, the 397-residue chain is Putative F-box protein At2g04810 (397 aa).

In terms of domain architecture, F-box spans Ser-20–Leu-68.

The protein is Putative F-box protein At2g04810 of Arabidopsis thaliana (Mouse-ear cress).